Here is a 416-residue protein sequence, read N- to C-terminus: Phosphoglycerate kinase (416 aa).

14 residues coordinate (2R)-3-phosphoglycerate: V23, D24, F25, N26, Q38, R39, S62, H63, G65, R66, L121, R122, H168, and R169. G212 contributes to the ADP binding site. A CDP-binding site is contributed by G212. Positions 213 and 214 each coordinate AMP. Residue A213 participates in ATP binding. Residue A213 participates in Mg(2+) binding. Positions 216 and 217 each coordinate Mg(2+). D217 contacts CDP. K218 contacts AMP. K218 contacts ATP. G236 contributes to the ADP binding site. Position 236 (G236) interacts with CDP. Residues G237 and G311 each contribute to the AMP site. Residues G237 and G311 each coordinate ATP. Residues G336 and F341 each coordinate CDP. F341 is a binding site for ADP. E342 is an AMP binding site. 3 residues coordinate ATP: E342, D373, and T374. D373 provides a ligand contact to Mg(2+).

Belongs to the phosphoglycerate kinase family. In terms of assembly, monomer. Mg(2+) serves as cofactor.

The protein resides in the cytoplasm. It localises to the mitochondrion. The catalysed reaction is (2R)-3-phosphoglycerate + ATP = (2R)-3-phospho-glyceroyl phosphate + ADP. Its pathway is carbohydrate degradation; glycolysis; pyruvate from D-glyceraldehyde 3-phosphate: step 2/5. In terms of biological role, catalyzes one of the two ATP producing reactions in the glycolytic pathway via the reversible conversion of 1,3-diphosphoglycerate to 3-phosphoglycerate. Both L- and D- forms of purine and pyrimidine nucleotides can be used as substrates, but the activity is much lower on pyrimidines. Negatively regulates the biosynthesis of acetyl-CoA from pyruvate in the mitochondrion. This is Phosphoglycerate kinase (PGK1) from Eremothecium gossypii (strain ATCC 10895 / CBS 109.51 / FGSC 9923 / NRRL Y-1056) (Yeast).